Reading from the N-terminus, the 312-residue chain is DNA-directed RNA polymerase subunit alpha (312 aa).

Positions 1–226 (MIEFEKPIIT…EHLNLFTDLT (226 aa)) are alpha N-terminal domain (alpha-NTD). Residues 242-312 (NDEKLLDRTI…DLGLGLKNDK (71 aa)) form an alpha C-terminal domain (alpha-CTD) region.

The protein belongs to the RNA polymerase alpha chain family. In terms of assembly, homodimer. The RNAP catalytic core consists of 2 alpha, 1 beta, 1 beta' and 1 omega subunit. When a sigma factor is associated with the core the holoenzyme is formed, which can initiate transcription.

It carries out the reaction RNA(n) + a ribonucleoside 5'-triphosphate = RNA(n+1) + diphosphate. Its function is as follows. DNA-dependent RNA polymerase catalyzes the transcription of DNA into RNA using the four ribonucleoside triphosphates as substrates. The protein is DNA-directed RNA polymerase subunit alpha of Streptococcus thermophilus (strain CNRZ 1066).